Here is a 453-residue protein sequence, read N- to C-terminus: Aldehyde dehydrogenase, dimeric NADP-preferring (453 aa).

S2 carries the post-translational modification N-acetylserine. At K178 the chain carries N6-acetyllysine. 188–193 (GSTAVG) contributes to the NAD(+) binding site. N6-acetyllysine is present on K194. Catalysis depends on residues E210 and C244.

This sequence belongs to the aldehyde dehydrogenase family. As to quaternary structure, homodimer. In terms of tissue distribution, constitutively expressed in cornea, stomach, skin, bladder and lungs. Lowest expression levels in lungs and bladder.

The protein localises to the cytoplasm. It carries out the reaction an aldehyde + NAD(+) + H2O = a carboxylate + NADH + 2 H(+). It catalyses the reaction octanal + NAD(+) + H2O = octanoate + NADH + 2 H(+). ALDHs play a major role in the detoxification of alcohol-derived acetaldehyde. They are involved in the metabolism of corticosteroids, biogenic amines, neurotransmitters, and lipid peroxidation. Oxidizes medium and long chain aldehydes into non-toxic fatty acids. Preferentially oxidizes aromatic aldehyde substrates. Comprises about 50 percent of corneal epithelial soluble proteins. May play a role in preventing corneal damage caused by ultraviolet light. This is Aldehyde dehydrogenase, dimeric NADP-preferring (Aldh3a1) from Mus musculus (Mouse).